A 494-amino-acid polypeptide reads, in one-letter code: Lysine--tRNA ligase (494 aa).

The Mg(2+) site is built by Glu407 and Glu414.

Belongs to the class-II aminoacyl-tRNA synthetase family. Homodimer. The cofactor is Mg(2+).

It localises to the cytoplasm. The enzyme catalyses tRNA(Lys) + L-lysine + ATP = L-lysyl-tRNA(Lys) + AMP + diphosphate. This Lactococcus lactis subsp. cremoris (strain MG1363) protein is Lysine--tRNA ligase.